The following is a 147-amino-acid chain: Nucleoside diphosphate kinase (147 aa).

Lys-9, Arg-85, Thr-91, Arg-102, and Asn-112 together coordinate ATP. His-115 (pros-phosphohistidine intermediate) is an active-site residue.

Belongs to the NDK family. Requires Mg(2+) as cofactor.

The enzyme catalyses a 2'-deoxyribonucleoside 5'-diphosphate + ATP = a 2'-deoxyribonucleoside 5'-triphosphate + ADP. The catalysed reaction is a ribonucleoside 5'-diphosphate + ATP = a ribonucleoside 5'-triphosphate + ADP. Functionally, major role in the synthesis of nucleoside triphosphates other than ATP. The ATP gamma phosphate is transferred to the NDP beta phosphate via a ping-pong mechanism, using a phosphorylated active-site intermediate. The chain is Nucleoside diphosphate kinase (NDK1) from Encephalitozoon cuniculi (strain GB-M1) (Microsporidian parasite).